Reading from the N-terminus, the 115-residue chain is Small ribosomal subunit protein bS6 (115 aa).

It belongs to the bacterial ribosomal protein bS6 family.

In terms of biological role, binds together with bS18 to 16S ribosomal RNA. The polypeptide is Small ribosomal subunit protein bS6 (Picosynechococcus sp. (strain ATCC 27264 / PCC 7002 / PR-6) (Agmenellum quadruplicatum)).